A 143-amino-acid chain; its full sequence is Small ribosomal subunit protein uS12 (143 aa).

At P62 the chain carries Hydroxyproline.

The protein belongs to the universal ribosomal protein uS12 family. As to quaternary structure, component of the 40S small ribosomal subunit.

It is found in the cytoplasm. It localises to the cytosol. The protein localises to the rough endoplasmic reticulum. In Caenorhabditis elegans, this protein is Small ribosomal subunit protein uS12 (rps-23).